The sequence spans 217 residues: UPF0502 protein ASA_1460 (217 aa).

Belongs to the UPF0502 family.

This chain is UPF0502 protein ASA_1460, found in Aeromonas salmonicida (strain A449).